We begin with the raw amino-acid sequence, 331 residues long: D/L-glyceraldehyde reductase (331 aa).

Tyr51 functions as the Proton donor in the catalytic mechanism. A substrate-binding site is contributed by His114. 213–276 (SAFGNNTKGL…SVTKARIAEN (64 aa)) provides a ligand contact to NADP(+).

This sequence belongs to the aldo/keto reductase family.

The enzyme catalyses glycerol + NADP(+) = L-glyceraldehyde + NADPH + H(+). It carries out the reaction glycerol + NADP(+) = D-glyceraldehyde + NADPH + H(+). Its pathway is carbohydrate acid metabolism. Its function is as follows. Mediates the conversion of L-glyceraldehyde to glycerol in D-galacturonate catabolic process. Also able to reduce D-glyceraldehyde. The sequence is that of D/L-glyceraldehyde reductase (gld1) from Hypocrea jecorina (Trichoderma reesei).